We begin with the raw amino-acid sequence, 282 residues long: Phosphatidylserine decarboxylase proenzyme (282 aa).

Active-site charge relay system; for autoendoproteolytic cleavage activity residues include aspartate 88, histidine 144, and serine 247. Serine 247 serves as the catalytic Schiff-base intermediate with substrate; via pyruvic acid; for decarboxylase activity. Serine 247 is modified (pyruvic acid (Ser); by autocatalysis).

It belongs to the phosphatidylserine decarboxylase family. PSD-B subfamily. Prokaryotic type I sub-subfamily. In terms of assembly, heterodimer of a large membrane-associated beta subunit and a small pyruvoyl-containing alpha subunit. Pyruvate is required as a cofactor. In terms of processing, is synthesized initially as an inactive proenzyme. Formation of the active enzyme involves a self-maturation process in which the active site pyruvoyl group is generated from an internal serine residue via an autocatalytic post-translational modification. Two non-identical subunits are generated from the proenzyme in this reaction, and the pyruvate is formed at the N-terminus of the alpha chain, which is derived from the carboxyl end of the proenzyme. The autoendoproteolytic cleavage occurs by a canonical serine protease mechanism, in which the side chain hydroxyl group of the serine supplies its oxygen atom to form the C-terminus of the beta chain, while the remainder of the serine residue undergoes an oxidative deamination to produce ammonia and the pyruvoyl prosthetic group on the alpha chain. During this reaction, the Ser that is part of the protease active site of the proenzyme becomes the pyruvoyl prosthetic group, which constitutes an essential element of the active site of the mature decarboxylase.

The protein localises to the cell membrane. It catalyses the reaction a 1,2-diacyl-sn-glycero-3-phospho-L-serine + H(+) = a 1,2-diacyl-sn-glycero-3-phosphoethanolamine + CO2. The protein operates within phospholipid metabolism; phosphatidylethanolamine biosynthesis; phosphatidylethanolamine from CDP-diacylglycerol: step 2/2. Catalyzes the formation of phosphatidylethanolamine (PtdEtn) from phosphatidylserine (PtdSer). The sequence is that of Phosphatidylserine decarboxylase proenzyme from Xanthomonas oryzae pv. oryzae (strain KACC10331 / KXO85).